A 453-amino-acid polypeptide reads, in one-letter code: UDP-glycosyltransferase 76E1 (453 aa).

UDP-alpha-D-glucose is bound by residues Ser272, 331–333, 348–356, and 370–373; these read APQ, HCGWNSTLE, and TGDQ.

This sequence belongs to the UDP-glycosyltransferase family.

Its function is as follows. Possesses low quercetin 3-O-glucosyltransferase and 7-O-glucosyltransferase activities in vitro. The protein is UDP-glycosyltransferase 76E1 (UGT76E1) of Arabidopsis thaliana (Mouse-ear cress).